Here is a 787-residue protein sequence, read N- to C-terminus: DNA ligase (787 aa).

Residues 32–36 (DAEYD), 81–82 (SL), and E121 contribute to the NAD(+) site. The active-site N6-AMP-lysine intermediate is the K123. Residues R144, E181, K297, and K321 each contribute to the NAD(+) site. 4 residues coordinate Zn(2+): C415, C418, C445, and C451. One can recognise a BRCT domain in the interval 703–787 (VEGLPLAGQT…RLTELGVAVD (85 aa)).

The protein belongs to the NAD-dependent DNA ligase family. LigA subfamily. It depends on Mg(2+) as a cofactor. Mn(2+) is required as a cofactor.

The catalysed reaction is NAD(+) + (deoxyribonucleotide)n-3'-hydroxyl + 5'-phospho-(deoxyribonucleotide)m = (deoxyribonucleotide)n+m + AMP + beta-nicotinamide D-nucleotide.. Its function is as follows. DNA ligase that catalyzes the formation of phosphodiester linkages between 5'-phosphoryl and 3'-hydroxyl groups in double-stranded DNA using NAD as a coenzyme and as the energy source for the reaction. It is essential for DNA replication and repair of damaged DNA. The protein is DNA ligase of Pseudomonas syringae pv. tomato (strain ATCC BAA-871 / DC3000).